Reading from the N-terminus, the 259-residue chain is Phosphate import ATP-binding protein PstB (259 aa).

Residues 5-248 (IEVNDLNVYY…NIIFSNPSAQ (244 aa)) enclose the ABC transporter domain. 37 to 44 (GPSGCGKS) contacts ATP.

It belongs to the ABC transporter superfamily. Phosphate importer (TC 3.A.1.7) family. The complex is composed of two ATP-binding proteins (PstB), two transmembrane proteins (PstC and PstA) and a solute-binding protein (PstS).

It localises to the cell membrane. It carries out the reaction phosphate(out) + ATP + H2O = ADP + 2 phosphate(in) + H(+). Part of the ABC transporter complex PstSACB involved in phosphate import. Responsible for energy coupling to the transport system. The chain is Phosphate import ATP-binding protein PstB from Leifsonia xyli subsp. xyli (strain CTCB07).